The primary structure comprises 373 residues: CASP-like protein UU6 (373 aa).

Disordered regions lie at residues 1–100 and 172–195; these read MGTL…GSEG and TKET…PKKK. The Cytoplasmic segment spans residues 1-204; sequence MGTLTDPTVD…KHRLRKHLTA (204 aa). Polar residues predominate over residues 56 to 74; the sequence is KTNTGNAAESTASTENGET. Residues 205–225 traverse the membrane as a helical segment; sequence IGAYSFAFRFSETVLSLIAIV. The Extracellular segment spans residues 226 to 253; sequence VMCSTRGSMRTDGVDFGTLKFNHFQAYR. The chain crosses the membrane as a helical span at residues 254–274; sequence YLVAVNVIVFVYSTFQFIQLL. At 275-276 the chain is on the cytoplasmic side; the sequence is YT. A helical transmembrane segment spans residues 277-297; the sequence is VILGISFIPSIFISTWMTFGF. The Extracellular portion of the chain corresponds to 298-342; it reads DQLFLYLLLSASTSAATVANMSYTGEMGIQLCSRFDVGSFCSKAD. A glycan (N-linked (GlcNAc...) asparagine) is linked at N317. Residues 343–363 form a helical membrane-spanning segment; the sequence is VAVTMSFFAVLAMLSSTILAI. Over 364–373 the chain is Cytoplasmic; sequence YRIAVLLREY.

It belongs to the Casparian strip membrane proteins (CASP) family. In terms of assembly, homodimer and heterodimers.

Its subcellular location is the cell membrane. This chain is CASP-like protein UU6, found in Physcomitrium patens (Spreading-leaved earth moss).